We begin with the raw amino-acid sequence, 146 residues long: VHLSGEEKGAVTALWGKVNQEEVGGEALGRLLVVYPWTQRFFDSFGDLSSASAVMGNAKVKAHGKKVLNSFSDGLKNLDNLKGAFAKLSELHCDKLHVDPENFKLLGNVLVVVLARTFGKEFTPPVQSAFQKVAAGVATALAHKYH.

Position 1 is an N-acetylvaline (valine 1). Positions 2-146 constitute a Globin domain; the sequence is HLSGEEKGAV…VATALAHKYH (145 aa). Threonine 12 carries the post-translational modification Phosphothreonine. Serine 44 carries the phosphoserine modification. Lysine 59 is modified (N6-acetyllysine). Histidine 63 contributes to the heme b binding site. N6-acetyllysine is present on lysine 82. Histidine 92 is a binding site for heme b. Position 93 is an S-nitrosocysteine (cysteine 93). Lysine 144 bears the N6-acetyllysine mark.

It belongs to the globin family. Heterotetramer of two alpha chains and two beta chains. Red blood cells.

Involved in oxygen transport from the lung to the various peripheral tissues. This chain is Hemoglobin subunit beta (HBB), found in Tadarida brasiliensis (Brazilian free-tailed bat).